The chain runs to 1430 residues: ABC transporter eupT (1430 aa).

Positions 1 to 26 are disordered; it reads MAPAIDSTVNDLQPNTPNPEKALSSQ. Residues 112-368 form the ABC transporter 1 domain; that stretch reads LALPAMIRQL…FVNLGFECPA (257 aa). N-linked (GlcNAc...) asparagine glycosylation is present at Asn292. A run of 5 helical transmembrane segments spans residues 476–496, 511–531, 557–577, 586–606, and 620–640; these read WPAVWVMVGNTIMALIMSSLF, VVLFMAILFNAFSSILEVMTL, VLVDMPMKITSTISFNLVFYF, GNFFFYLLVVFLIVLAMSGVF, and MVPASVLMLALLIFTGFVVPV. Asn684 carries an N-linked (GlcNAc...) asparagine glycan. Residues 707–727 form a helical membrane-spanning segment; that stretch reads VGIIIAMVIFNYLMYFIASEY. In terms of domain architecture, ABC transporter 2 spans 789–1032; that stretch reads FHWNNVCYDL…TLIDYFERNG (244 aa). Residue 825–832 coordinates ATP; it reads GVSGAGKT. N-linked (GlcNAc...) asparagine glycosylation is present at Asn1019. 6 consecutive transmembrane segments (helical) span residues 1133–1153, 1213–1233, 1249–1269, 1278–1298, 1305–1325, and 1400–1420; these read ITLCIATSLFIGLVFFNAPLS, LPWSTLASVFMWALFYYPIGF, LMWLLFWQFLVWVSTFTHMCI, GGNIANFLFVLAFFFCGVLAS, FWIFLYRASPLSYWVSAVLST, and FGILWVYIGFNIAAALALYWI.

The protein belongs to the ABC transporter superfamily. ABCG family. PDR (TC 3.A.1.205) subfamily.

It localises to the cell membrane. ABC transporter; part of the gene cluster that mediates the biosynthesis of eupenifeldin, a bistropolone meroterpenoid that acts as an antitumor agent. This is ABC transporter eupT from Phoma sp.